Here is a 600-residue protein sequence, read N- to C-terminus: Chaperonin 60 subunit beta 1, chloroplastic (600 aa).

Residues 1–12 are compositionally biased toward polar residues; that stretch reads MASTFTATSSIG. A disordered region spans residues 1-23; sequence MASTFTATSSIGSMVAPNGHKSD. The N-terminal 54 residues, 1–54, are a transit peptide targeting the chloroplast; sequence MASTFTATSSIGSMVAPNGHKSDKKLISKLSSSSFGRRQSVCPRPRRSSSAIVC. 2 positions are modified to phosphoserine: Ser101 and Ser478.

This sequence belongs to the chaperonin (HSP60) family. Part of the Cpn60 complex composed of 7 alpha and 7 beta subunits. Can also form a complex composed of 14 beta subunits only. Both complexes show ATPase activity. The Cpn60 complex interacts with the Cpn10 complex. Interacts with RAB during heat stress. Expressed in leaves, stems, petioles and flowers.

It localises to the plastid. It is found in the chloroplast stroma. Binds RuBisCO small and large subunits and is implicated in the assembly of the enzyme oligomer. Involved in protein assisted folding. Required for proper plastid division. This chain is Chaperonin 60 subunit beta 1, chloroplastic (CPN60B1), found in Arabidopsis thaliana (Mouse-ear cress).